The following is a 204-amino-acid chain: Putative copper-binding protein (204 aa).

The Cu cation site is built by Cys-77, Cys-81, and His-166.

This sequence belongs to the SCO1/2 family.

This is Putative copper-binding protein (scoP) from Stutzerimonas stutzeri (Pseudomonas stutzeri).